The chain runs to 101 residues: Small ribosomal subunit protein uS14 (101 aa).

Basic and acidic residues predominate over residues 1–10; the sequence is MAKKSAIEKN. The interval 1 to 23 is disordered; that stretch reads MAKKSAIEKNNRRKKMTKNAAPK. Positions 11 to 23 are enriched in basic residues; that stretch reads NRRKKMTKNAAPK.

As to quaternary structure, part of the 30S ribosomal subunit. Contacts proteins S3 and S10.

Binds 16S rRNA, required for the assembly of 30S particles and may also be responsible for determining the conformation of the 16S rRNA at the A site. The chain is Small ribosomal subunit protein uS14 from Rhodopseudomonas palustris (strain ATCC BAA-98 / CGA009).